The sequence spans 319 residues: tRNA uridine(34) hydroxylase (319 aa).

A Rhodanese domain is found at 124–218 (LDEDTVILDA…YGKNEETKGE (95 aa)). The Cysteine persulfide intermediate role is filled by C178.

The protein belongs to the TrhO family.

The enzyme catalyses uridine(34) in tRNA + AH2 + O2 = 5-hydroxyuridine(34) in tRNA + A + H2O. In terms of biological role, catalyzes oxygen-dependent 5-hydroxyuridine (ho5U) modification at position 34 in tRNAs. This is tRNA uridine(34) hydroxylase from Listeria monocytogenes serovar 1/2a (strain ATCC BAA-679 / EGD-e).